The chain runs to 184 residues: Threonylcarbamoyl-AMP synthase (184 aa).

Residues 1 to 184 form the YrdC-like domain; sequence MNNLENIVEQ…IFTQHIFRQG (184 aa).

This sequence belongs to the SUA5 family. TsaC subfamily.

Its subcellular location is the cytoplasm. The catalysed reaction is L-threonine + hydrogencarbonate + ATP = L-threonylcarbamoyladenylate + diphosphate + H2O. Functionally, required for the formation of a threonylcarbamoyl group on adenosine at position 37 (t(6)A37) in tRNAs that read codons beginning with adenine. Catalyzes the conversion of L-threonine, HCO(3)(-)/CO(2) and ATP to give threonylcarbamoyl-AMP (TC-AMP) as the acyladenylate intermediate, with the release of diphosphate. This is Threonylcarbamoyl-AMP synthase from Actinobacillus pleuropneumoniae serotype 5b (strain L20).